We begin with the raw amino-acid sequence, 116 residues long: Hydrogenase maturation factor HypA (116 aa).

A Ni(2+)-binding site is contributed by His2. Residues Cys73, Cys76, Cys90, and Cys93 each coordinate Zn(2+).

It belongs to the HypA/HybF family.

In terms of biological role, involved in the maturation of [NiFe] hydrogenases. Required for nickel insertion into the metal center of the hydrogenase. In Escherichia coli O157:H7, this protein is Hydrogenase maturation factor HypA.